A 238-amino-acid polypeptide reads, in one-letter code: Transcription termination/antitermination protein NusG (238 aa).

Belongs to the NusG family.

In terms of biological role, participates in transcription elongation, termination and antitermination. The polypeptide is Transcription termination/antitermination protein NusG (Mycobacterium tuberculosis (strain CDC 1551 / Oshkosh)).